Reading from the N-terminus, the 291-residue chain is rRNA 2'-O-methyltransferase fibrillarin (291 aa).

Basic and acidic residues-rich tracts occupy residues 1–12 (MKKTNKRPDGRK) and 20–29 (FRSDKGEGRG). Positions 1–45 (MKKTNKRPDGRKFQKGGKPFRSDKGEGRGRMNNKKKGSVNAGLDR) are disordered. Residues R28 and R62 each carry the asymmetric dimethylarginine modification. S-adenosyl-L-methionine-binding positions include 134–135 (TT), 153–154 (EF), 178–179 (DA), and 198–201 (DVSQ).

This sequence belongs to the methyltransferase superfamily. Fibrillarin family. Component of box C/D small nucleolar ribonucleoprotein (snoRNP) particles.

The protein resides in the nucleus. It localises to the nucleolus. It carries out the reaction L-glutaminyl-[histone H2A] + S-adenosyl-L-methionine = N(5)-methyl-L-glutaminyl-[histone H2A] + S-adenosyl-L-homocysteine + H(+). S-adenosyl-L-methionine-dependent methyltransferase that has the ability to methylate both RNAs and proteins. Involved in pre-rRNA processing. Utilizes the methyl donor S-adenosyl-L-methionine to catalyze the site-specific 2'-hydroxyl methylation of ribose moieties in pre-ribosomal RNA. Site specificity is provided by a guide RNA that base pairs with the substrate. Methylation occurs at a characteristic distance from the sequence involved in base pairing with the guide RNA. Also acts as a protein methyltransferase by mediating methylation of 'Gln-105' of histone H2A (H2AQ105me), a modification that impairs binding of the FACT complex and is specifically present at 35S ribosomal DNA locus. The polypeptide is rRNA 2'-O-methyltransferase fibrillarin (NOP1) (Encephalitozoon cuniculi (strain GB-M1) (Microsporidian parasite)).